A 161-amino-acid chain; its full sequence is MADSDNDSGGHKDGGNASTREQDRFLPIANVSRIMKKALPANAKISKDAKETVQECVSEFISFITGEASDKCQREKRKTINGDDLLWAMTTLGFEDYVEPLKVYLQKYREVEGEKTTTAGRQGDKEGGGGGGGAGSGSGGAPMYGGGMVTTMGHQFSHHFS.

The disordered stretch occupies residues 1–23 (MADSDNDSGGHKDGGNASTREQD). A2 carries the N-acetylalanine modification. Over residues 8-23 (SGGHKDGGNASTREQD) the composition is skewed to basic and acidic residues. The DNA-binding element occupies 26–32 (LPIANVS). Residues 53–64 (VQECVSEFISFI) form a subunit association domain (SAD) region. The segment at 114-146 (EKTTTAGRQGDKEGGGGGGGAGSGSGGAPMYGG) is disordered. The span at 128-146 (GGGGGGAGSGSGGAPMYGG) shows a compositional bias: gly residues.

It belongs to the NFYB/HAP3 subunit family. In terms of assembly, heterotrimeric transcription factor composed of three components, NF-YA, NF-YB and NF-YC. NF-YB and NF-YC must interact and dimerize for NF-YA association and DNA binding. Component of a heat stress-inducible transcriptional complex with NF-YA and NF-YB subunits made, at least, of NFYA2, NFYB3 and DPB3-1 in cooperation with DREB2A. Binds directly with DPB3-1. Ubiquitous. Expressed in seedlings, petioles, hypocotyls, reproductive organ tissues and leaves.

It is found in the nucleus. It localises to the cytoplasm. The protein resides in the cytosol. Component of the NF-Y/HAP transcription factor complex. The NF-Y complex stimulates the transcription of various genes by recognizing and binding to a CCAAT motif in promoters. Promotes the expression of heat stress-inducible genes by contributing to the formation of a heat stress-specific transcriptional complex with NF-Y subunits (e.g. DPB3-1, NF-YA2 and NF-YB3) and DREB2A at the promoter of target genes, thus promoting heat tolerance. In Arabidopsis thaliana (Mouse-ear cress), this protein is Nuclear transcription factor Y subunit B-3.